We begin with the raw amino-acid sequence, 193 residues long: Inner membrane protein p54 (193 aa).

The chain crosses the membrane as a helical span at residues tyrosine 32–phenylalanine 52. The disordered stretch occupies residues proline 84–arginine 126. Repeat copies occupy residues alanine 135–serine 138, alanine 139–serine 142, alanine 143–serine 146, and alanine 147–serine 150. The tract at residues alanine 135–serine 150 is 4 X 4 AA tandem repeats of A-A-A-S. Residues tyrosine 159–threonine 171 form an interaction with host DYNLL1 region.

This sequence belongs to the asfivirus envelope protein p54 family. In terms of assembly, interacts with the host light chain cytoplasmic dynein DYNLL1; this interaction is critical for intracellular microtubule-dependent virus transport toward viral factories.

The protein resides in the virion membrane. Its subcellular location is the host cytoplasm. It localises to the host cytoskeleton. The protein localises to the host endoplasmic reticulum membrane. Its function is as follows. Inner envelope protein involved, through its interaction with host dynein, in the intracellular microtubule-dependent transport of viral capsid toward viral factories. Seems to induce caspase-3 activation and apoptosis. Plays a role in virion morphogenesis by recruiting and transforming the host ER membranes into the precursors of the viral envelope. Involved in virus attachment to the host cell. The polypeptide is Inner membrane protein p54 (Ornithodoros (relapsing fever ticks)).